Reading from the N-terminus, the 133-residue chain is Large ribosomal subunit protein bL20 (133 aa).

This sequence belongs to the bacterial ribosomal protein bL20 family.

Its function is as follows. Binds directly to 23S ribosomal RNA and is necessary for the in vitro assembly process of the 50S ribosomal subunit. It is not involved in the protein synthesizing functions of that subunit. In Bartonella quintana (strain Toulouse) (Rochalimaea quintana), this protein is Large ribosomal subunit protein bL20.